Here is a 215-residue protein sequence, read N- to C-terminus: Probable nicotinate-nucleotide adenylyltransferase (215 aa).

It belongs to the NadD family.

The enzyme catalyses nicotinate beta-D-ribonucleotide + ATP + H(+) = deamido-NAD(+) + diphosphate. The protein operates within cofactor biosynthesis; NAD(+) biosynthesis; deamido-NAD(+) from nicotinate D-ribonucleotide: step 1/1. In terms of biological role, catalyzes the reversible adenylation of nicotinate mononucleotide (NaMN) to nicotinic acid adenine dinucleotide (NaAD). The protein is Probable nicotinate-nucleotide adenylyltransferase of Fervidobacterium nodosum (strain ATCC 35602 / DSM 5306 / Rt17-B1).